Here is a 536-residue protein sequence, read N- to C-terminus: CTP synthase (536 aa).

The amidoligase domain stretch occupies residues 1-267 (MTKFIFVTGG…DDIVIKRLQL (267 aa)). S13 serves as a coordination point for CTP. Residue S13 participates in UTP binding. Position 14-19 (14-19 (SLGKGI)) interacts with ATP. Y54 provides a ligand contact to L-glutamine. D71 lines the ATP pocket. Mg(2+)-binding residues include D71 and E141. CTP is bound by residues 148 to 150 (DIE), 188 to 193 (KTKPTQ), and K224. UTP contacts are provided by residues 188–193 (KTKPTQ) and K224. Position 240-242 (240-242 (RDA)) interacts with ATP. Positions 293–535 (TIGLVGKYVS…IEASLKYQQN (243 aa)) constitute a Glutamine amidotransferase type-1 domain. G355 contacts L-glutamine. C382 acts as the Nucleophile; for glutamine hydrolysis in catalysis. Residues 383–386 (LGMQ), E406, and R463 each bind L-glutamine. Active-site residues include H508 and E510.

This sequence belongs to the CTP synthase family. Homotetramer.

The enzyme catalyses UTP + L-glutamine + ATP + H2O = CTP + L-glutamate + ADP + phosphate + 2 H(+). It catalyses the reaction L-glutamine + H2O = L-glutamate + NH4(+). It carries out the reaction UTP + NH4(+) + ATP = CTP + ADP + phosphate + 2 H(+). It functions in the pathway pyrimidine metabolism; CTP biosynthesis via de novo pathway; CTP from UDP: step 2/2. Its activity is regulated as follows. Allosterically activated by GTP, when glutamine is the substrate; GTP has no effect on the reaction when ammonia is the substrate. The allosteric effector GTP functions by stabilizing the protein conformation that binds the tetrahedral intermediate(s) formed during glutamine hydrolysis. Inhibited by the product CTP, via allosteric rather than competitive inhibition. Catalyzes the ATP-dependent amination of UTP to CTP with either L-glutamine or ammonia as the source of nitrogen. Regulates intracellular CTP levels through interactions with the four ribonucleotide triphosphates. The polypeptide is CTP synthase (Staphylococcus aureus (strain NCTC 8325 / PS 47)).